The following is a 453-amino-acid chain: Macrophage scavenger receptor types I and II (453 aa).

Residues 1-50 (MAQWDDFPDQQEDTDSCTESVKFDARSVTALLPPHPKNGPTLQERMKSYK) lie on the Cytoplasmic side of the membrane. Serine 27 is subject to Phosphoserine. The helical; Signal-anchor for type II membrane protein transmembrane segment at 51-76 (TALITLYLIVFVVLVPIIGIVAAQLL) threads the bilayer. A spacer region spans residues 77 to 108 (KWETKNCTVGSVNADISPSPEGKGNGSEDEMR). Residues 77-453 (KWETKNCTVG…DEDAGVTCTT (377 aa)) are Extracellular-facing. N-linked (GlcNAc...) asparagine glycosylation is found at asparagine 82, asparagine 101, asparagine 142, asparagine 183, asparagine 220, asparagine 248, and asparagine 266. A coiled-coil region spans residues 194–255 (ETLNGRVQEN…LNNITNDLRL (62 aa)). 2 disordered regions span residues 267–295 (ITLL…PGFP) and 313–349 (PGVR…QRQS). The 72-residue stretch at 272 to 343 (GPPGPPGEKG…KGQKGEKGSG (72 aa)) folds into the Collagen-like domain. The SRCR domain maps to 352 to 452 (VRLVGGSGPH…HDEDAGVTCT (101 aa)). Disulfide bonds link cysteine 377–cysteine 441, cysteine 390–cysteine 451, and cysteine 421–cysteine 431.

As to quaternary structure, homotrimer. Interacts with MYO18A.

It is found in the membrane. Functionally, membrane glycoproteins implicated in the pathologic deposition of cholesterol in arterial walls during atherogenesis. Two types of receptor subunits exist. These receptors mediate the endocytosis of a diverse group of macromolecules, including modified low density lipoproteins (LDL). The sequence is that of Macrophage scavenger receptor types I and II (MSR1) from Bos taurus (Bovine).